The primary structure comprises 126 residues: Aspartate 1-decarboxylase (126 aa).

The active-site Schiff-base intermediate with substrate; via pyruvic acid is the serine 25. Serine 25 is subject to Pyruvic acid (Ser). Threonine 57 contributes to the substrate binding site. Tyrosine 58 acts as the Proton donor in catalysis. Residue 72–74 (GAA) participates in substrate binding.

Belongs to the PanD family. As to quaternary structure, heterooctamer of four alpha and four beta subunits. The cofactor is pyruvate. Is synthesized initially as an inactive proenzyme, which is activated by self-cleavage at a specific serine bond to produce a beta-subunit with a hydroxyl group at its C-terminus and an alpha-subunit with a pyruvoyl group at its N-terminus.

It localises to the cytoplasm. The enzyme catalyses L-aspartate + H(+) = beta-alanine + CO2. Its pathway is cofactor biosynthesis; (R)-pantothenate biosynthesis; beta-alanine from L-aspartate: step 1/1. Its function is as follows. Catalyzes the pyruvoyl-dependent decarboxylation of aspartate to produce beta-alanine. This Campylobacter jejuni subsp. jejuni serotype O:6 (strain 81116 / NCTC 11828) protein is Aspartate 1-decarboxylase.